Here is a 437-residue protein sequence, read N- to C-terminus: Chaperone SurA (437 aa).

The first 22 residues, 1–22 (MKNWKFPLISTLLLLLTINVHA), serve as a signal peptide directing secretion. 2 PpiC domains span residues 173–274 (TVQY…KIDD) and 283–383 (VTEV…EVLE).

It is found in the periplasm. It catalyses the reaction [protein]-peptidylproline (omega=180) = [protein]-peptidylproline (omega=0). In terms of biological role, chaperone involved in the correct folding and assembly of outer membrane proteins. Recognizes specific patterns of aromatic residues and the orientation of their side chains, which are found more frequently in integral outer membrane proteins. May act in both early periplasmic and late outer membrane-associated steps of protein maturation. In Aliivibrio fischeri (strain ATCC 700601 / ES114) (Vibrio fischeri), this protein is Chaperone SurA.